Consider the following 151-residue polypeptide: Small ribosomal subunit protein uS15 (151 aa).

The protein belongs to the universal ribosomal protein uS15 family.

The sequence is that of Small ribosomal subunit protein uS15 (RPS13) from Lumbricus rubellus (Humus earthworm).